Reading from the N-terminus, the 265-residue chain is Type III pantothenate kinase (265 aa).

An ATP-binding site is contributed by 6–13 (DVGNTNIV). 112–115 (GADR) is a substrate binding site. Catalysis depends on aspartate 114, which acts as the Proton acceptor. Residue aspartate 134 coordinates K(+). Threonine 137 is an ATP binding site. Threonine 189 is a substrate binding site.

The protein belongs to the type III pantothenate kinase family. Homodimer. NH4(+) is required as a cofactor. K(+) serves as cofactor.

It localises to the cytoplasm. It catalyses the reaction (R)-pantothenate + ATP = (R)-4'-phosphopantothenate + ADP + H(+). It participates in cofactor biosynthesis; coenzyme A biosynthesis; CoA from (R)-pantothenate: step 1/5. In terms of biological role, catalyzes the phosphorylation of pantothenate (Pan), the first step in CoA biosynthesis. This chain is Type III pantothenate kinase, found in Saccharopolyspora erythraea (strain ATCC 11635 / DSM 40517 / JCM 4748 / NBRC 13426 / NCIMB 8594 / NRRL 2338).